The sequence spans 294 residues: Formamidopyrimidine-DNA glycosylase (294 aa).

The active-site Schiff-base intermediate with DNA is the Pro-2. Catalysis depends on Glu-3, which acts as the Proton donor. The active-site Proton donor; for beta-elimination activity is Lys-61. Positions 104, 123, and 169 each coordinate DNA. The FPG-type zinc-finger motif lies at 255-289 (AVYGRQDEPCRRCGAPIVREKFMNRSSYSCPRCQP). Arg-279 serves as the catalytic Proton donor; for delta-elimination activity.

It belongs to the FPG family. As to quaternary structure, monomer. The cofactor is Zn(2+).

It catalyses the reaction Hydrolysis of DNA containing ring-opened 7-methylguanine residues, releasing 2,6-diamino-4-hydroxy-5-(N-methyl)formamidopyrimidine.. The catalysed reaction is 2'-deoxyribonucleotide-(2'-deoxyribose 5'-phosphate)-2'-deoxyribonucleotide-DNA = a 3'-end 2'-deoxyribonucleotide-(2,3-dehydro-2,3-deoxyribose 5'-phosphate)-DNA + a 5'-end 5'-phospho-2'-deoxyribonucleoside-DNA + H(+). Involved in base excision repair of DNA damaged by oxidation or by mutagenic agents. Acts as a DNA glycosylase that recognizes and removes damaged bases. Has a preference for oxidized purines, such as 7,8-dihydro-8-oxoguanine (8-oxoG). Has AP (apurinic/apyrimidinic) lyase activity and introduces nicks in the DNA strand. Cleaves the DNA backbone by beta-delta elimination to generate a single-strand break at the site of the removed base with both 3'- and 5'-phosphates. This chain is Formamidopyrimidine-DNA glycosylase, found in Nocardia farcinica (strain IFM 10152).